Here is a 109-residue protein sequence, read N- to C-terminus: Large ribosomal subunit protein bL31B (109 aa).

Residues 79 to 109 (NVRQPAQQPQPEEDALPAAKGKKKVVTKKKK) form a disordered region. The span at 98 to 109 (KGKKKVVTKKKK) shows a compositional bias: basic residues.

It belongs to the bacterial ribosomal protein bL31 family. Type B subfamily. Part of the 50S ribosomal subunit.

The sequence is that of Large ribosomal subunit protein bL31B from Chlamydia pneumoniae (Chlamydophila pneumoniae).